Here is a 491-residue protein sequence, read N- to C-terminus: Glutamyl-tRNA(Gln) amidotransferase subunit A (491 aa).

Catalysis depends on charge relay system residues lysine 78 and serine 158. Serine 182 acts as the Acyl-ester intermediate in catalysis.

Belongs to the amidase family. GatA subfamily. In terms of assembly, heterotrimer of A, B and C subunits.

It catalyses the reaction L-glutamyl-tRNA(Gln) + L-glutamine + ATP + H2O = L-glutaminyl-tRNA(Gln) + L-glutamate + ADP + phosphate + H(+). Allows the formation of correctly charged Gln-tRNA(Gln) through the transamidation of misacylated Glu-tRNA(Gln) in organisms which lack glutaminyl-tRNA synthetase. The reaction takes place in the presence of glutamine and ATP through an activated gamma-phospho-Glu-tRNA(Gln). This is Glutamyl-tRNA(Gln) amidotransferase subunit A from Bradyrhizobium sp. (strain BTAi1 / ATCC BAA-1182).